We begin with the raw amino-acid sequence, 1226 residues long: Methionine synthase (1226 aa).

A Hcy-binding domain is found at 7–327 (KVQIEKQLSE…EHIRQMALVV (321 aa)). C249, C312, and C313 together coordinate Zn(2+). The region spanning 358 to 619 (FINVGERTNV…VPEDLREAVE (262 aa)) is the Pterin-binding domain. Residues 652–746 (SALEWRDWPV…FINASKEVGA (95 aa)) enclose the B12-binding N-terminal domain. Residues E696, 758–762 (GDVHD), H761, S806, T810, and A862 contribute to the methylcob(III)alamin site. In terms of domain architecture, B12-binding spans 748–883 (NGKILLATVK…SNELKPSFVE (136 aa)). The AdoMet activation domain maps to 899–1226 (KQPRTKPVTL…AEKWLGPNLN (328 aa)). Residues D949, R1137, and 1192–1193 (YF) contribute to the S-adenosyl-L-methionine site.

This sequence belongs to the vitamin-B12 dependent methionine synthase family. Methylcob(III)alamin is required as a cofactor. The cofactor is Zn(2+).

The enzyme catalyses (6S)-5-methyl-5,6,7,8-tetrahydrofolate + L-homocysteine = (6S)-5,6,7,8-tetrahydrofolate + L-methionine. It functions in the pathway amino-acid biosynthesis; L-methionine biosynthesis via de novo pathway; L-methionine from L-homocysteine (MetH route): step 1/1. Functionally, catalyzes the transfer of a methyl group from methyl-cobalamin to homocysteine, yielding enzyme-bound cob(I)alamin and methionine. Subsequently, remethylates the cofactor using methyltetrahydrofolate. The sequence is that of Methionine synthase (metH) from Aliivibrio fischeri (Vibrio fischeri).